We begin with the raw amino-acid sequence, 86 residues long: MKPGIHPNYRTVVFHDTSADTYFTVGSTIATARTIERDGQTYPYVTLDISSASHPYYTGKQKEFSKEGSAARFHQRYGSFLTKKAS.

The protein belongs to the bacterial ribosomal protein bL31 family. Type B subfamily. Part of the 50S ribosomal subunit.

The protein is Large ribosomal subunit protein bL31B of Yersinia enterocolitica serotype O:8 / biotype 1B (strain NCTC 13174 / 8081).